Consider the following 446-residue polypeptide: BAG family molecular chaperone regulator 7 (446 aa).

A disordered region spans residues 230 to 252; the sequence is TGGEKKKKHEEKEKKEKIETKSK. Positions 239 to 250 are enriched in basic and acidic residues; it reads EEKEKKEKIETK. The IQ domain maps to 303–332; that stretch reads PEYAAVMIQRAFKAYLIRRSKSLRALRDLA. Positions 330 to 407 constitute a BAG domain; that stretch reads DLAIAKTKLK…AMLDVVDPQP (78 aa). Position 443 is a phosphothreonine (Thr443).

In terms of assembly, binds to the ATPase domain of HSP70/HSC70 chaperones. Interacts with HSP70-11/BIP2.

It localises to the endoplasmic reticulum. Co-chaperone that regulates diverse cellular pathways, such as programmed cell death and stress responses. Necessary for the proper maintenance of the unfolded protein response (UPR) during heat and cold tolerance. This chain is BAG family molecular chaperone regulator 7 (BAG7), found in Arabidopsis thaliana (Mouse-ear cress).